The chain runs to 649 residues: Lipoteichoic acid synthase 2 (649 aa).

Residues Met-1 to Gly-9 are Cytoplasmic-facing. Residues Leu-10 to Leu-30 form a helical membrane-spanning segment. Topologically, residues Asn-31–Lys-42 are extracellular. The helical transmembrane segment at Ile-43 to Phe-63 threads the bilayer. Residues Lys-64–Gln-69 lie on the Cytoplasmic side of the membrane. The helical transmembrane segment at Thr-70–Tyr-90 threads the bilayer. Residues Arg-91 to Ser-118 lie on the Extracellular side of the membrane. Residues Leu-119–Ile-139 traverse the membrane as a helical segment. Residues Lys-140–Lys-151 lie on the Cytoplasmic side of the membrane. A helical transmembrane segment spans residues Ser-152–Glu-172. Over Ser-173–Lys-649 the chain is Extracellular. The Mn(2+) site is built by Glu-253 and Thr-297. The active site involves Thr-297. His-412 is a binding site for substrate. Asp-471 and His-472 together coordinate Mn(2+). The disordered stretch occupies residues Phe-622–Lys-649. Positions Asp-631–Lys-649 are enriched in basic and acidic residues.

The protein belongs to the LTA synthase family. Proteolytically cleaved.

The protein localises to the cell membrane. Its subcellular location is the secreted. It participates in cell wall biogenesis; lipoteichoic acid biosynthesis. In terms of biological role, catalyzes the polymerization of lipoteichoic acid (LTA) polyglycerol phosphate, a reaction that presumably uses phosphatidylglycerol (PG) as substrate. This Bacillus subtilis (strain 168) protein is Lipoteichoic acid synthase 2 (ltaS2).